A 968-amino-acid polypeptide reads, in one-letter code: MPFTLGQRWISDTENELGLGTVVAQDARMVTLLFSTSGENRLYARTDAPITRVMFNPGDTVTSHEGWQLLIDTIEEKEGLLTYIGTRLDNGETGCTLREVLLDSKLTFSKPQDRLFAGQIDRMDRFALRYRARKFYSEQFRAPWNGLRGIRASLIPHQLHIASEVGQRHAPRVLLADEVGLGKTIEAGMIIHQQMLTGRAERVLIVVPESLLHQWLVEMLRRFNLHFSLFDDERYSQSLLDSDNPFETEQLVLCSLDFVRRNKERLTHLTEAEWDILVVDEAHHLAWSETAPSREYQVIERLAHHIPGVLLLTATPEQLGMQSHFARLRLLDPNRFHDYQAFADEQQRYRLVADTVGLLLNNELLDAAAMTLLAEMLGGQNADALLARVNEQNAADDDARRRLTAMLMDSHGTSRVMFRNTRQGVKGFPARRLHACALPLPAQYQTAFKVAGIMGGKQRLDESARHMLYPEQIFQQFEGQNATWWNFDPRVQWLVDFLLDLRQEKVLVICAHAGTALQLEQVLREREGIRAAVFHEGLSLVDRDRAAAYFASAEDGAQVLLCSEIGSEGRNFQFASQMVMFDLPFNPDLLEQRIGRLDRIGQNRDIQIHVPYLEQSAQAVLLRWYHEGLDAFEHTCPTGRALYDETYQTLQGYLAEPGALTGLTAFIHDCRARHDALKAQMEQGRDRLLELHSNGGEPARVLAQTLAEQDNDSQLVNFALNLFDIIGISQEDRSDNLLVLKPSDHMLVPDFPDVSEEGCTITFNRDQALAREETQFISWEHPIIRNGLDLVLSSESGNSALSLLKNKALPVGTLLLELIYVVESQAPRNLQLNRFLPATPLRLLLDKNGTNLAPQVEFEQFNRQLNAVKRHTASKLVSAVQPEVHGMLTHGEHLVAEQAQALIDEARAQADLLLSAELSRLKALRAVNPAIRDNELEAVAENRRQVLRHLDEASWRLDAIRLIVVTHQ.

The 171-residue stretch at 164–334 (EVGQRHAPRV…FARLRLLDPN (171 aa)) folds into the Helicase ATP-binding domain. Position 177-184 (177-184 (DEVGLGKT)) interacts with ATP. A DEAH box motif is present at residues 280-283 (DEAH). Residues 493 to 644 (WLVDFLLDLR…TCPTGRALYD (152 aa)) form the Helicase C-terminal domain.

The protein belongs to the SNF2/RAD54 helicase family. RapA subfamily. In terms of assembly, interacts with the RNAP. Has a higher affinity for the core RNAP than for the holoenzyme. Its ATPase activity is stimulated by binding to RNAP.

Functionally, transcription regulator that activates transcription by stimulating RNA polymerase (RNAP) recycling in case of stress conditions such as supercoiled DNA or high salt concentrations. Probably acts by releasing the RNAP, when it is trapped or immobilized on tightly supercoiled DNA. Does not activate transcription on linear DNA. Probably not involved in DNA repair. The polypeptide is RNA polymerase-associated protein RapA (Sodalis glossinidius (strain morsitans)).